The chain runs to 305 residues: Nod factor export ATP-binding protein I (305 aa).

The 230-residue stretch at Ile-8–Tyr-237 folds into the ABC transporter domain. Gly-40–Ser-47 contacts ATP.

It belongs to the ABC transporter superfamily. Lipooligosaccharide exporter (TC 3.A.1.102) family. As to quaternary structure, the complex is composed of two ATP-binding proteins (NodI) and two transmembrane proteins (NodJ).

It localises to the cell inner membrane. Functionally, part of the ABC transporter complex NodIJ involved in the export of the nodulation factors (Nod factors), the bacterial signal molecules that induce symbiosis and subsequent nodulation induction. Nod factors are LCO (lipo-chitin oligosaccharide), a modified beta-1,4-linked N-acetylglucosamine oligosaccharide. This subunit is responsible for energy coupling to the transport system. This chain is Nod factor export ATP-binding protein I, found in Bradyrhizobium sp. (strain SNU001).